Here is a 355-residue protein sequence, read N- to C-terminus: 6-aminohexanoate-oligomer endohydrolase (355 aa).

Thr267 functions as the Nucleophile in the catalytic mechanism.

This sequence belongs to the peptidase S58 family. In terms of assembly, heterotetramer composed of 4 alpha/beta heterodimers. Exists at the monomer/dimer/trimer equilibrium in aqueous solution. In terms of processing, expressed as an inactive precursor that is cleaved autocatalytically at Asn266/Thr267 to generate an active enzyme composed of an alpha subunit and a beta subunit.

The enzyme catalyses [N-(6-aminohexanoyl)]n + H2O = [N-(6-aminohexanoyl)]n-x + [N-(6-aminohexanoyl)]x.. It functions in the pathway xenobiotic degradation; nylon-6 oligomer degradation. In terms of biological role, involved in the degradation of nylon-6 oligomers. Degrades cyclic and linear oligomers of 6-aminohexanoate (Ahx) with a degree of polymerization greater than three by an endo-type mode. Cannot use Ahx cyclic dimer or the Ahx linear dimer. This chain is 6-aminohexanoate-oligomer endohydrolase, found in Paenarthrobacter ureafaciens.